The chain runs to 1016 residues: Probable outer membrane protein PmpH (1016 aa).

The first 24 residues, 1–24 (MPFSLRSTSFCFLACLCSYSYGFA), serve as a signal peptide directing secretion. One can recognise an Autotransporter domain in the interval 697–1016 (GELVPNSLWV…FVSMGLNRIF (320 aa)).

This sequence belongs to the PMP outer membrane protein family.

The protein localises to the secreted. It localises to the cell wall. The protein resides in the cell outer membrane. This Chlamydia trachomatis serovar D (strain ATCC VR-885 / DSM 19411 / UW-3/Cx) protein is Probable outer membrane protein PmpH (pmpH).